Consider the following 533-residue polypeptide: Calcium/calmodulin-dependent protein kinase type II subunit delta (533 aa).

An N-acetylalanine modification is found at Ala-2. In terms of domain architecture, Protein kinase spans 14 to 272 (YQLFEELGKG…ASEALKHPWI (259 aa)). ATP-binding positions include 20 to 28 (LGKGAFSVV) and Lys-43. Residue Asp-136 is the Proton acceptor of the active site. Residues 283 to 292 (HRQETVDCLK) are autoinhibitory domain. Phosphothreonine; by autocatalysis is present on Thr-287. The calmodulin-binding stretch occupies residues 291 to 301 (LKKFNARRKLK). Phosphothreonine; by autocatalysis is present on residues Thr-306 and Thr-307. Residue Ser-315 is modified to Phosphoserine. The residue at position 318 (Lys-318) is an N6-acetyllysine. Phosphoserine occurs at positions 319 and 364. Positions 337-375 (TSPKENIPTPALEPQTTVIHNPDGNKESTESSNTTIEDE) are disordered. Residue Thr-365 is modified to Phosphothreonine. Residue Ser-367 is modified to Phosphoserine. Phosphothreonine is present on residues Thr-370 and Thr-371. 3 positions are modified to phosphoserine: Ser-438, Ser-524, and Ser-528.

The protein belongs to the protein kinase superfamily. CAMK Ser/Thr protein kinase family. CaMK subfamily. CAMK2 is composed of 4 different chains: alpha (CAMK2A), beta (CAMK2B), gamma (CAMK2G), and delta (CAMK2D). The different isoforms assemble into homo- or heteromultimeric holoenzymes composed of 12 subunits with two hexameric rings stacked one on top of the other. Interacts with RRAD and CACNB2. Post-translationally, autophosphorylation of Thr-287 following activation by Ca(2+)/calmodulin. Phosphorylation of Thr-287 locks the kinase into an activated state. As to expression, expressed in liver.

It localises to the cell membrane. It is found in the sarcolemma. The protein localises to the sarcoplasmic reticulum membrane. The enzyme catalyses L-seryl-[protein] + ATP = O-phospho-L-seryl-[protein] + ADP + H(+). It catalyses the reaction L-threonyl-[protein] + ATP = O-phospho-L-threonyl-[protein] + ADP + H(+). Activated by Ca(2+)/calmodulin. Binding of calmodulin results in conformational change that relieves intrasteric autoinhibition and allows autophosphorylation of Thr-287 which turns the kinase in a constitutively active form and confers to the kinase a Ca(2+)-independent activity. In terms of biological role, calcium/calmodulin-dependent protein kinase involved in the regulation of Ca(2+) homeostatis and excitation-contraction coupling (ECC) in heart by targeting ion channels, transporters and accessory proteins involved in Ca(2+) influx into the myocyte, Ca(2+) release from the sarcoplasmic reticulum (SR), SR Ca(2+) uptake and Na(+) and K(+) channel transport. Targets also transcription factors and signaling molecules to regulate heart function. In its activated form, is involved in the pathogenesis of dilated cardiomyopathy and heart failure. Contributes to cardiac decompensation and heart failure by regulating SR Ca(2+) release via direct phosphorylation of RYR2 Ca(2+) channel on 'Ser-2808'. In the nucleus, phosphorylates the MEF2 repressor HDAC4, promoting its nuclear export and binding to 14-3-3 protein, and expression of MEF2 and genes involved in the hypertrophic program. Is essential for left ventricular remodeling responses to myocardial infarction. In pathological myocardial remodeling acts downstream of the beta adrenergic receptor signaling cascade to regulate key proteins involved in ECC. Regulates Ca(2+) influx to myocytes by binding and phosphorylating the L-type Ca(2+) channel subunit beta-2 CACNB2. In addition to Ca(2+) channels, can target and regulate the cardiac sarcolemmal Na(+) channel Nav1.5/SCN5A and the K+ channel Kv4.3/KCND3, which contribute to arrhythmogenesis in heart failure. Phosphorylates phospholamban (PLN/PLB), an endogenous inhibitor of SERCA2A/ATP2A2, contributing to the enhancement of SR Ca(2+) uptake that may be important in frequency-dependent acceleration of relaxation (FDAR) and maintenance of contractile function during acidosis. May participate in the modulation of skeletal muscle function in response to exercise, by regulating SR Ca(2+) transport through phosphorylation of PLN/PLB and triadin, a ryanodine receptor-coupling factor. In response to interferon-gamma (IFN-gamma) stimulation, catalyzes phosphorylation of STAT1, stimulating the JAK-STAT signaling pathway. This Oryctolagus cuniculus (Rabbit) protein is Calcium/calmodulin-dependent protein kinase type II subunit delta (CAMK2D).